An 85-amino-acid chain; its full sequence is Large ribosomal subunit protein bL27 (85 aa).

The segment at 1–22 (MAHKKAAGSTRNGRDSESKRLG) is disordered.

This sequence belongs to the bacterial ribosomal protein bL27 family.

The sequence is that of Large ribosomal subunit protein bL27 from Pseudoalteromonas translucida (strain TAC 125).